Consider the following 238-residue polypeptide: Ribose-5-phosphate isomerase A (238 aa).

Substrate is bound by residues 30 to 33, 87 to 90, and 100 to 103; these read SGST, DGAD, and KGGG. Glu109 serves as the catalytic Proton acceptor. Lys127 is a substrate binding site.

The protein belongs to the ribose 5-phosphate isomerase family. In terms of assembly, homodimer.

It carries out the reaction aldehydo-D-ribose 5-phosphate = D-ribulose 5-phosphate. It functions in the pathway carbohydrate degradation; pentose phosphate pathway; D-ribose 5-phosphate from D-ribulose 5-phosphate (non-oxidative stage): step 1/1. Functionally, catalyzes the reversible conversion of ribose-5-phosphate to ribulose 5-phosphate. The chain is Ribose-5-phosphate isomerase A from Prochlorococcus marinus (strain MIT 9303).